The chain runs to 2446 residues: Transcription factor HIVEP2 (2446 aa).

The segment at 1-93 (MDTGDTALGQ…YPPHRPSPYS (93 aa)) is disordered. Residues 17–28 (GETDKASGRWRQ) show a composition bias toward basic and acidic residues. 2 C2H2-type zinc fingers span residues 189–211 (YICP…IRSH) and 217–239 (YPCI…RKSH). 4 disordered regions span residues 272–303 (HSDG…PIPL), 340–416 (ESSQ…PPNT), 543–563 (SNSV…LRGS), and 751–985 (SHGH…SFER). 2 stretches are compositionally biased toward polar residues: residues 381 to 416 (SEPS…PPNT) and 543 to 556 (SNSV…NLTI). Residues 751–760 (SHGHTERFDP) are compositionally biased toward basic and acidic residues. Over residues 766–777 (QPGSPSLVSEES) the composition is skewed to polar residues. The segment covering 782 to 791 (DSDKMSDLGG) has biased composition (basic and acidic residues). Residues 800–812 (SVIQHTNSLSRPN) show a composition bias toward polar residues. Serine 819 carries the post-translational modification Phosphoserine. Low complexity predominate over residues 863–878 (PSPSQQVQQQSYHTQP). Residues 892 to 916 (RVTEEPDKPEKEKEAQSKEPEKPVE) show a composition bias toward basic and acidic residues. A Nuclear localization signal motif is present at residues 937 to 943 (PKKKRLR). A phosphoserine mark is found at serine 950, serine 955, serine 1048, serine 1443, and serine 1447. A compositionally biased stretch (low complexity) spans 952 to 982 (GESSFESTGTGLSRSPSQESNLSHSSSFSMS). The tract at residues 1485–1603 (KDLSRPQKPQ…LEEEGKGHKR (119 aa)) is disordered. 2 stretches are compositionally biased toward low complexity: residues 1510–1533 (SGSS…SPSS) and 1576–1586 (SDMSMSPQSSS). 2 consecutive C2H2-type zinc fingers follow at residues 1799 to 1821 (YICE…IRTH) and 1827 to 1851 (YVCK…SKAH). Disordered regions lie at residues 1882-1951 (AAEK…VNVG) and 2024-2129 (EECM…RRDL). The span at 1899 to 1925 (DAEESDGEDGDDNDDDDEDEDDFDDQG) shows a compositional bias: acidic residues. Residues 2029-2053 (PSEPSSSPRDFSPSSHHSSPGYDSS) show a composition bias toward low complexity. Tandem repeats lie at residues 2053 to 2056 (SPCR), 2059 to 2062 (SPKR), 2071 to 2074 (SPRR), 2083 to 2086 (SPMR), 2089 to 2092 (SPRK), 2106 to 2109 (SPRR), 2112 to 2115 (SPRR), 2118 to 2121 (SPGK), 2130 to 2133 (SPRR), and 2145 to 2148 (SPRR). Residues 2053 to 2148 (SPCRDNSPKR…TTIRAPSPRR (96 aa)) are 10 X 4 AA tandem repeats of S-P-[RGMKC]-[RK]. Basic and acidic residues predominate over residues 2078-2107 (PRRDLSPMRHLSPRKEAALRREMSQRDVSP). Residue serine 2118 is modified to Phosphoserine. 3 disordered regions span residues 2242-2325 (PALS…QEEN), 2371-2403 (HFSR…SQTP), and 2423-2446 (HSSK…SQLH). Phosphoserine is present on residues serine 2297 and serine 2301. Residues 2307–2317 (KQSTSEDSLNA) are compositionally biased toward polar residues. Residues 2387-2396 (PDLHDGEKDN) are compositionally biased toward basic and acidic residues. 2 positions are modified to phosphoserine: serine 2429 and serine 2431. Residues 2433–2446 (EESKDPSSEKSQLH) are compositionally biased toward basic and acidic residues.

As to quaternary structure, interacts with TCF4. In terms of tissue distribution, expressed in brain and skeletal muscle.

The protein resides in the nucleus. This protein specifically binds to the DNA sequence 5'-GGGACTTTCC-3' which is found in the enhancer elements of numerous viral promoters such as those of SV40, CMV, or HIV1. In addition, related sequences are found in the enhancer elements of a number of cellular promoters, including those of the class I MHC, interleukin-2 receptor, somatostatin receptor II, and interferon-beta genes. It may act in T-cell activation. This chain is Transcription factor HIVEP2 (HIVEP2), found in Homo sapiens (Human).